A 304-amino-acid chain; its full sequence is Pyridoxal 5'-phosphate synthase subunit pyroA (304 aa).

D-ribose 5-phosphate is bound at residue Asp28. Lys85 (schiff-base intermediate with D-ribose 5-phosphate) is an active-site residue. Gly157 lines the D-ribose 5-phosphate pocket. Arg169 is a D-glyceraldehyde 3-phosphate binding site. D-ribose 5-phosphate is bound by residues Gly224 and 245-246 (GS).

It belongs to the PdxS/SNZ family.

The catalysed reaction is aldehydo-D-ribose 5-phosphate + D-glyceraldehyde 3-phosphate + L-glutamine = pyridoxal 5'-phosphate + L-glutamate + phosphate + 3 H2O + H(+). It functions in the pathway cofactor biosynthesis; pyridoxal 5'-phosphate biosynthesis. Its function is as follows. Catalyzes the formation of pyridoxal 5'-phosphate from ribose 5-phosphate (RBP), glyceraldehyde 3-phosphate (G3P) and ammonia. The ammonia is provided by PDX2. Can also use ribulose 5-phosphate and dihydroxyacetone phosphate as substrates, resulting from enzyme-catalyzed isomerization of RBP and G3P, respectively. Also plays an indirect role in resistance to singlet oxygen-generating photosensitizers. The polypeptide is Pyridoxal 5'-phosphate synthase subunit pyroA (pyroA) (Emericella nidulans (strain FGSC A4 / ATCC 38163 / CBS 112.46 / NRRL 194 / M139) (Aspergillus nidulans)).